The chain runs to 231 residues: Ninja-family protein AFP3 (231 aa).

A compositionally biased stretch (basic residues) spans 83–96 (AKRKRSEKQRKHKA). The tract at residues 83–152 (AKRKRSEKQR…SAQSQPENLG (70 aa)) is disordered. A compositionally biased stretch (polar residues) spans 130 to 152 (QATTNKSVETSPSSAQSQPENLG).

The protein belongs to the Ninja family. In terms of assembly, forms a heterodimer with AFP2. Interacts with ABI5/DPBF1, DPBF2, AREB3/DPBF3, EEL/DPBF4, ABF1, ABF3/DPBF5 and ABF4/AREB2.

It is found in the nucleus. Functionally, acts as a negative regulator of abscisic acid (ABA) response and stress responses. The chain is Ninja-family protein AFP3 (AFP3) from Arabidopsis thaliana (Mouse-ear cress).